We begin with the raw amino-acid sequence, 635 residues long: 1-deoxy-D-xylulose-5-phosphate synthase (635 aa).

Residues His-77 and 118-120 (GHA) contribute to the thiamine diphosphate site. Residue Asp-150 participates in Mg(2+) binding. Thiamine diphosphate is bound by residues 151-152 (AS), Asn-179, Tyr-290, and Glu-372. Asn-179 provides a ligand contact to Mg(2+).

This sequence belongs to the transketolase family. DXPS subfamily. As to quaternary structure, homodimer. Mg(2+) serves as cofactor. Thiamine diphosphate is required as a cofactor.

The catalysed reaction is D-glyceraldehyde 3-phosphate + pyruvate + H(+) = 1-deoxy-D-xylulose 5-phosphate + CO2. It participates in metabolic intermediate biosynthesis; 1-deoxy-D-xylulose 5-phosphate biosynthesis; 1-deoxy-D-xylulose 5-phosphate from D-glyceraldehyde 3-phosphate and pyruvate: step 1/1. Catalyzes the acyloin condensation reaction between C atoms 2 and 3 of pyruvate and glyceraldehyde 3-phosphate to yield 1-deoxy-D-xylulose-5-phosphate (DXP). In Leptospira borgpetersenii serovar Hardjo-bovis (strain JB197), this protein is 1-deoxy-D-xylulose-5-phosphate synthase.